We begin with the raw amino-acid sequence, 644 residues long: L-aspartate oxidase 2-a, chloroplastic (644 aa).

FAD-binding positions include 94–97, K116, 123–130, and D294; these read SGIA and NTNYAQGG. R369 functions as the Proton donor/acceptor in the catalytic mechanism. FAD is bound by residues E454 and 470 to 471; that span reads SL.

It belongs to the FAD-dependent oxidoreductase 2 family. NadB subfamily. FAD serves as cofactor.

The protein resides in the plastid. It localises to the chloroplast. It carries out the reaction L-aspartate + O2 = iminosuccinate + H2O2. Its pathway is alkaloid biosynthesis; nicotine biosynthesis. The protein operates within cofactor biosynthesis; NAD(+) biosynthesis; iminoaspartate from L-aspartate (oxidase route): step 1/1. In terms of biological role, involved in the biosynthesis of pyridine alkaloid natural products, leading mainly to the production of anabasine, anatabine, nicotine and nornicotine, effective deterrents against herbivores with antiparasitic and pesticide properties (neurotoxins); nornicotine serves as the precursor in the synthesis of the carcinogen compound N'-nitrosonornicotine (NNN). Catalyzes the oxidation of L-aspartate to iminoaspartate. This Nicotiana tabacum (Common tobacco) protein is L-aspartate oxidase 2-a, chloroplastic.